Here is a 414-residue protein sequence, read N- to C-terminus: Secreted beta-glucosidase sun1 (414 aa).

A signal peptide spans 1 to 19 (MKFNTVALTLATAGSLVTA). Asparagine 80 carries N-linked (GlcNAc...) asparagine glycosylation. Residues 115-140 (TSASSSETVQTPAASSSSASSSSTAT) are compositionally biased toward low complexity. Residues 115 to 141 (TSASSSETVQTPAASSSSASSSSTATG) form a disordered region. The N-linked (GlcNAc...) asparagine glycan is linked to asparagine 377.

The protein belongs to the SUN family. Highly glycosylated.

It is found in the secreted. It localises to the cell wall. Functionally, cell surface beta-glucosidase involved in cell wall biosynthesis and septation, and thus required for normal growth and correct hyphal morphogenesis. Has hydrolytic activity on linear (1-&gt;3)-beta-D-glucans such as laminaribiose and other laminarioligosaccharides. Also has a minor transferase activity. This chain is Secreted beta-glucosidase sun1 (sun1), found in Aspergillus fumigatus (strain ATCC MYA-4609 / CBS 101355 / FGSC A1100 / Af293) (Neosartorya fumigata).